The following is a 573-amino-acid chain: Potassium-transporting ATPase potassium-binding subunit (573 aa).

10 helical membrane passes run 6 to 26, 66 to 86, 135 to 155, 177 to 197, 257 to 277, 283 to 303, 382 to 402, 428 to 448, 493 to 513, and 537 to 557; these read ILFALFIVTIALITKPLGSYI, FFSLVSFSVMAFIFVLVILLL, ALAVQNFVSAAVGLCVAIALI, VFWILLPISIVIAIVYIFQGV, IQMVSIFAIAAALTYTFGKWV, GWLIFGVMLVLFIISLVVMTI, IFGGVGAGFYGFFMFLMLAVF, MFALLISLCCVLVFTGLAAVI, ITIALSMLIGRFGVIFAVIML, and FIFAILVFFTILLIGGLTIFP.

It belongs to the KdpA family. The system is composed of three essential subunits: KdpA, KdpB and KdpC.

The protein resides in the cell inner membrane. Functionally, part of the high-affinity ATP-driven potassium transport (or Kdp) system, which catalyzes the hydrolysis of ATP coupled with the electrogenic transport of potassium into the cytoplasm. This subunit binds the periplasmic potassium ions and delivers the ions to the membrane domain of KdpB through an intramembrane tunnel. The polypeptide is Potassium-transporting ATPase potassium-binding subunit (Francisella tularensis subsp. tularensis (strain WY96-3418)).